Reading from the N-terminus, the 396-residue chain is Acetyl-CoA acetyltransferase (396 aa).

The active-site Acyl-thioester intermediate is cysteine 89. CoA-binding positions include 223–225 (RKS) and serine 249. Active-site proton acceptor residues include histidine 352 and cysteine 382.

It belongs to the thiolase-like superfamily. Thiolase family.

The protein localises to the cytoplasm. The catalysed reaction is 2 acetyl-CoA = acetoacetyl-CoA + CoA. Its pathway is lipid metabolism; butanoate metabolism. Involved in syntrophic growth of S.wolfei with butyrate, as part of the butyrate oxidation pathway. Probably catalyzes the beta-keto thiolysis of acetoacetyl-CoA, leading to 2 acetyl-CoA molecules. The polypeptide is Acetyl-CoA acetyltransferase (Syntrophomonas wolfei subsp. wolfei (strain DSM 2245B / Goettingen)).